The sequence spans 281 residues: Formamidopyrimidine-DNA glycosylase (281 aa).

Pro-2 serves as the catalytic Schiff-base intermediate with DNA. Residue Glu-3 is the Proton donor of the active site. The active-site Proton donor; for beta-elimination activity is Lys-58. Residues His-94, Arg-113, and Arg-156 each contribute to the DNA site. An FPG-type; degenerate zinc finger spans residues 241–281 (AVYDRVGQPCPGCDCDVARTGGIERMVQSGRSTFFCGRRQR). Arg-271 functions as the Proton donor; for delta-elimination activity in the catalytic mechanism.

This sequence belongs to the FPG family. Monomer. Zn(2+) serves as cofactor.

It catalyses the reaction Hydrolysis of DNA containing ring-opened 7-methylguanine residues, releasing 2,6-diamino-4-hydroxy-5-(N-methyl)formamidopyrimidine.. The enzyme catalyses 2'-deoxyribonucleotide-(2'-deoxyribose 5'-phosphate)-2'-deoxyribonucleotide-DNA = a 3'-end 2'-deoxyribonucleotide-(2,3-dehydro-2,3-deoxyribose 5'-phosphate)-DNA + a 5'-end 5'-phospho-2'-deoxyribonucleoside-DNA + H(+). Involved in base excision repair of DNA damaged by oxidation or by mutagenic agents. Acts as a DNA glycosylase that recognizes and removes damaged bases. Has a preference for oxidized purines, such as 7,8-dihydro-8-oxoguanine (8-oxoG). Has AP (apurinic/apyrimidinic) lyase activity and introduces nicks in the DNA strand. Cleaves the DNA backbone by beta-delta elimination to generate a single-strand break at the site of the removed base with both 3'- and 5'-phosphates. The sequence is that of Formamidopyrimidine-DNA glycosylase from Rhodospirillum rubrum (strain ATCC 11170 / ATH 1.1.1 / DSM 467 / LMG 4362 / NCIMB 8255 / S1).